The sequence spans 496 residues: Fibronectin type III and SPRY domain-containing protein 1 (496 aa).

The stretch at 4–99 (QREALRKIIK…ALESSEELLE (96 aa)) forms a coiled coil. The COS domain maps to 105–162 (LQAMDSEDFPQAAKQIKDGVTMAPAFRLSLKAKVSDNMSHLMVDFAQERQMLQALKFL). A Fibronectin type-III domain is found at 164–268 (VPSAPVIDLA…EPVTLETPAF (105 aa)). The B30.2/SPRY domain occupies 268–477 (FMFRLDASTS…VTTGLQVPSA (210 aa)). Positions 301–336 (KAREKDGKGRTASPINSPARGTPSPKRMPSGRGGRD) are disordered. Residues arginine 310 and arginine 320 each carry the omega-N-methylarginine modification.

In terms of assembly, oligomerization is required for binding to microtubules. Highly expressed in brain tissues, including cerebellum, cerebral cortex, medulla, occipital pole, frontal lobe, temporal lobe and putamen. Lower expression in spinal cord.

It localises to the cytoplasm. Its subcellular location is the cytoskeleton. The protein resides in the microtubule organizing center. The protein localises to the centrosome. It is found in the nucleus. It localises to the cleavage furrow. In terms of biological role, may be involved in microtubule organization and stabilization. This is Fibronectin type III and SPRY domain-containing protein 1 (FSD1) from Homo sapiens (Human).